Consider the following 236-residue polypeptide: (5-formylfuran-3-yl)methyl phosphate synthase (236 aa).

Residue Lys-27 is the Schiff-base intermediate with substrate of the active site. The Proton acceptor role is filled by Lys-85.

This sequence belongs to the MfnB family.

The enzyme catalyses 2 D-glyceraldehyde 3-phosphate = 4-(hydroxymethyl)-2-furancarboxaldehyde phosphate + phosphate + 2 H2O. It functions in the pathway cofactor biosynthesis; methanofuran biosynthesis. In terms of biological role, catalyzes the formation of 4-(hydroxymethyl)-2-furancarboxaldehyde phosphate (4-HFC-P) from two molecules of glyceraldehyde-3-P (GA-3-P). This chain is (5-formylfuran-3-yl)methyl phosphate synthase, found in Methanococcus maripaludis (strain C6 / ATCC BAA-1332).